A 431-amino-acid chain; its full sequence is Tol-Pal system protein TolB (431 aa).

Residues 1-24 (MMKFLTRMLSAFAVLFFAISTAQA) form the signal peptide. Residues 318–340 (QVYRMSSSGGAASPVGGRGSAQI) form a disordered region. Residues 323–332 (SSSGGAASPV) are compositionally biased toward low complexity.

It belongs to the TolB family. As to quaternary structure, the Tol-Pal system is composed of five core proteins: the inner membrane proteins TolA, TolQ and TolR, the periplasmic protein TolB and the outer membrane protein Pal. They form a network linking the inner and outer membranes and the peptidoglycan layer.

The protein resides in the periplasm. Its function is as follows. Part of the Tol-Pal system, which plays a role in outer membrane invagination during cell division and is important for maintaining outer membrane integrity. This is Tol-Pal system protein TolB from Mannheimia succiniciproducens (strain KCTC 0769BP / MBEL55E).